Here is a 379-residue protein sequence, read N- to C-terminus: Cytochrome b (379 aa).

Transmembrane regions (helical) follow at residues 34–54, 78–99, 114–134, and 179–199; these read LGSL…FLTM, WLIR…YLHV, WMTG…GYVL, and FYTF…IHLF. Positions 84 and 98 each coordinate heme b. 2 residues coordinate heme b: His183 and His197. A ubiquinone is bound at residue His202. The next 4 helical transmembrane spans lie at 227-247, 289-309, 321-341, and 348-368; these read YKDM…CLID, LGGV…PFYN, MNQI…WIGK, and YIMT…FNVH.

Belongs to the cytochrome b family. As to quaternary structure, the main subunits of complex b-c1 are: cytochrome b, cytochrome c1 and the Rieske protein. The cofactor is heme b.

Its subcellular location is the mitochondrion inner membrane. In terms of biological role, component of the ubiquinol-cytochrome c reductase complex (complex III or cytochrome b-c1 complex) that is part of the mitochondrial respiratory chain. The b-c1 complex mediates electron transfer from ubiquinol to cytochrome c. Contributes to the generation of a proton gradient across the mitochondrial membrane that is then used for ATP synthesis. This chain is Cytochrome b (MT-CYB), found in Locusta migratoria (Migratory locust).